Reading from the N-terminus, the 184-residue chain is Large ribosomal subunit protein uL6 (184 aa).

This sequence belongs to the universal ribosomal protein uL6 family. In terms of assembly, part of the 50S ribosomal subunit.

Functionally, this protein binds to the 23S rRNA, and is important in its secondary structure. It is located near the subunit interface in the base of the L7/L12 stalk, and near the tRNA binding site of the peptidyltransferase center. The protein is Large ribosomal subunit protein uL6 of Thermococcus onnurineus (strain NA1).